We begin with the raw amino-acid sequence, 98 residues long: MNAERLMQVLLAPVVTEKATFVAEKHQQIAFRVVADATKPEIKAAVELLFKVQVEAVQVLNRKGKVKRFGRFVGRRRNERKAYVSLKEGQEIDFAEVK.

It belongs to the universal ribosomal protein uL23 family. As to quaternary structure, part of the 50S ribosomal subunit. Contacts protein L29, and trigger factor when it is bound to the ribosome.

Its function is as follows. One of the early assembly proteins it binds 23S rRNA. One of the proteins that surrounds the polypeptide exit tunnel on the outside of the ribosome. Forms the main docking site for trigger factor binding to the ribosome. The chain is Large ribosomal subunit protein uL23 from Bordetella avium (strain 197N).